A 153-amino-acid polypeptide reads, in one-letter code: Large ribosomal subunit protein uL15 (153 aa).

Residues Arg-21–Arg-41 form a disordered region. Positions Ile-23–Ile-35 are enriched in gly residues.

Belongs to the universal ribosomal protein uL15 family. Part of the 50S ribosomal subunit.

Functionally, binds to the 23S rRNA. In Rickettsia rickettsii (strain Iowa), this protein is Large ribosomal subunit protein uL15.